Reading from the N-terminus, the 403-residue chain is DNA primase DnaG (403 aa).

Positions 172 to 248 (DSVIIVEGRA…HIDYIARAPP (77 aa)) constitute a Toprim domain. Positions 178, 222, and 224 each coordinate Mg(2+). The disordered stretch occupies residues 279–300 (AAGEKTEAPAQPTQQQPPPAEA).

It belongs to the archaeal DnaG primase family. Forms a ternary complex with MCM helicase and DNA. Component of the archaeal exosome complex. Mg(2+) serves as cofactor.

It catalyses the reaction ssDNA + n NTP = ssDNA/pppN(pN)n-1 hybrid + (n-1) diphosphate.. Its function is as follows. RNA polymerase that catalyzes the synthesis of short RNA molecules used as primers for DNA polymerase during DNA replication. Also part of the exosome, which is a complex involved in RNA degradation. Acts as a poly(A)-binding protein that enhances the interaction between heteromeric, adenine-rich transcripts and the exosome. The chain is DNA primase DnaG from Pyrobaculum neutrophilum (strain DSM 2338 / JCM 9278 / NBRC 100436 / V24Sta) (Thermoproteus neutrophilus).